Consider the following 69-residue polypeptide: uncharacterized protein (69 aa).

Residues 1-21 (MNTKFILILLVLIISTIFVNS) form the signal peptide.

The protein resides in the secreted. This is an uncharacterized protein from Dictyostelium discoideum (Social amoeba).